The following is a 509-amino-acid chain: Heat shock 70 kDa protein 14-A (509 aa).

The protein belongs to the heat shock protein 70 family. In terms of assembly, component of ribosome-associated complex (RAC).

Its subcellular location is the cytoplasm. It is found in the cytosol. Its function is as follows. Component of the ribosome-associated complex (RAC), a complex involved in folding or maintaining nascent polypeptides in a folding-competent state. This is Heat shock 70 kDa protein 14-A (hspa14-a) from Xenopus laevis (African clawed frog).